The primary structure comprises 167 residues: Photosystem II extrinsic protein V (167 aa).

The N-terminal stretch at 1–30 (MVFKTLRRTLWLTLAALLAVFQFNLGAAQA) is a signal peptide. 4 residues coordinate heme c: Cys67, Cys70, His71, and His122.

It belongs to the cytochrome c family. PsbV subfamily. As to quaternary structure, PSII is composed of 1 copy each of membrane proteins PsbA, PsbB, PsbC, PsbD, PsbE, PsbF, PsbH, PsbI, PsbJ, PsbK, PsbL, PsbM, PsbT, PsbX, PsbY, PsbZ, Psb30/Ycf12, peripheral proteins PsbO, CyanoQ (PsbQ), PsbU, PsbV and a large number of cofactors. It forms dimeric complexes. Heme c serves as cofactor.

The protein localises to the cellular thylakoid membrane. Its function is as follows. One of the extrinsic, lumenal subunits of photosystem II (PSII). PSII is a light-driven water plastoquinone oxidoreductase, using light energy to abstract electrons from H(2)O, generating a proton gradient subsequently used for ATP formation. The extrinsic proteins stabilize the structure of photosystem II oxygen-evolving complex (OEC), the ion environment of oxygen evolution and protect the OEC against heat-induced inactivation. Low-potential cytochrome c that plays a role in the OEC of PSII. The chain is Photosystem II extrinsic protein V from Synechococcus elongatus (strain ATCC 33912 / PCC 7942 / FACHB-805) (Anacystis nidulans R2).